A 97-amino-acid polypeptide reads, in one-letter code: Probable gamma-secretase subunit PEN-2 (97 aa).

Topologically, residues 1 to 20 (MLIPEDDKLDDEKMINIAKK) are cytoplasmic. The segment at residues 21–39 (LWFIGFFFLPWVWLINILY) is an intramembrane region (helical). Topologically, residues 40–55 (FIPYRNSLNDKVKWYL) are cytoplasmic. A helical membrane pass occupies residues 56–76 (KFSLIGFLGYSTIFMGWMGIY). Topologically, residues 77-97 (LVNRNKWGAFGDDISITIPFG) are lumenal.

The protein belongs to the PEN-2 family. In terms of assembly, the functional gamma-secretase complex is composed of at least four polypeptides: a presenilin homodimer, nicastrin, aph1 and psenen.

The protein resides in the endoplasmic reticulum membrane. Its subcellular location is the golgi apparatus. It is found in the golgi stack membrane. The protein localises to the cell membrane. It localises to the membrane. In terms of biological role, essential subunit of the gamma-secretase complex, an endoprotease complex that catalyzes the intramembrane cleavage of integral membrane proteins such as Notch receptors. The gamma-secretase complex plays a role in Notch and Wnt signaling cascades and regulation of downstream processes via its role in processing key regulatory proteins. The protein is Probable gamma-secretase subunit PEN-2 (psenen) of Dictyostelium discoideum (Social amoeba).